The primary structure comprises 308 residues: Methionyl-tRNA formyltransferase (308 aa).

109 to 112 (SLLP) contacts (6S)-5,6,7,8-tetrahydrofolate.

The protein belongs to the Fmt family.

It carries out the reaction L-methionyl-tRNA(fMet) + (6R)-10-formyltetrahydrofolate = N-formyl-L-methionyl-tRNA(fMet) + (6S)-5,6,7,8-tetrahydrofolate + H(+). Functionally, attaches a formyl group to the free amino group of methionyl-tRNA(fMet). The formyl group appears to play a dual role in the initiator identity of N-formylmethionyl-tRNA by promoting its recognition by IF2 and preventing the misappropriation of this tRNA by the elongation apparatus. The chain is Methionyl-tRNA formyltransferase from Salinispora tropica (strain ATCC BAA-916 / DSM 44818 / JCM 13857 / NBRC 105044 / CNB-440).